A 397-amino-acid polypeptide reads, in one-letter code: Transcription factor GATA-5 (397 aa).

Residues 48–116 (GCEPSPQPPE…SAGGRDGSAY (69 aa)) form a disordered region. Residues 87–101 (PPGATAFPFAHSPSG) are compositionally biased toward low complexity. Positions 102-112 (PGSGGSAGGRD) are enriched in gly residues. GATA-type zinc fingers lie at residues 189–213 (CVNC…CNAC) and 243–267 (CTNC…CNAC). Positions 281 to 356 (AMKKESIQTR…ASGQEDDSLA (76 aa)) are disordered. A compositionally biased stretch (basic residues) spans 289–298 (TRKRKPKTIA). A compositionally biased stretch (low complexity) spans 310-335 (ASASPSAVASTDSSAATSKAKPSLAS).

It localises to the nucleus. Functionally, transcription factor required during cardiovascular development. Plays an important role in the transcriptional program(s) that underlies smooth muscle cell diversity. Binds to the functionally important CEF-1 nuclear protein binding site in the cardiac-specific slow/cardiac troponin C transcriptional enhancer. In Homo sapiens (Human), this protein is Transcription factor GATA-5.